We begin with the raw amino-acid sequence, 396 residues long: Growth-regulating factor 1 (396 aa).

Positions 18-53 (PFTASQWQELEHQALIYKYMASGTPIPSDLILPLRR) constitute a QLQ domain. 2 short sequence motifs (bipartite nuclear localization signal) span residues 86 to 105 (RKAE…KKWR) and 123 to 130 (RGKNRSRK). The WRC domain occupies 90–134 (DPEPGRCRRTDGKKWRCSKEAYPDSKYCEKHMHRGKNRSRKPVEM). The disordered stretch occupies residues 117–176 (CEKHMHRGKNRSRKPVEMSLATPPPPSSSATSAASNSSAGVAPTTTTTSSPAPSYSRPAP). Positions 120–129 (HMHRGKNRSR) are enriched in basic residues. A compositionally biased stretch (low complexity) spans 144–174 (SSATSAASNSSAGVAPTTTTTSSPAPSYSRP).

The protein belongs to the GRF family. Highly expressed in the intercalary meristem of the internode and in the shoot apex. Detected in the leaf primordia and emerging leaves in the uppermost node. Preferentially localized in the epidermis and in the tissues surrounding vascular bundles of the intercalary meristem of the internode and in adventitious roots of the second highest node. Low expression in the coleoptile and in the youngest leaf.

It localises to the nucleus. Functionally, transcription activator that plays a regulatory role in gibberellin-induced stem elongation. This chain is Growth-regulating factor 1 (GRF1), found in Oryza sativa subsp. indica (Rice).